Here is a 308-residue protein sequence, read N- to C-terminus: Inactive C-alpha-formylglycine-generating enzyme 2 (308 aa).

The N-terminal stretch at 1–33 (MRSEFWFPSMGSLLPPVLLLWLLSCPRLQLGHA) is a signal peptide. Cysteine 163 and cysteine 297 form a disulfide bridge. N-linked (GlcNAc...) asparagine glycosylation is present at asparagine 198. Ca(2+) is bound by residues asparagine 201, leucine 202, aspartate 215, phenylalanine 217, aspartate 236, glycine 239, valine 241, and glutamate 243. The span at 281-291 (RMGNTPDSASD) shows a compositional bias: polar residues. Residues 281–308 (RMGNTPDSASDNLGFRCASSAGRPKEDL) are disordered. A Non-canonical ER retention motif motif is present at residues 305 to 308 (KEDL).

It belongs to the sulfatase-modifying factor family. In terms of assembly, homodimer and heterodimer with SUMF1.

Its subcellular location is the endoplasmic reticulum lumen. Functionally, lacks formylglycine generating activity and is unable to convert newly synthesized inactive sulfatases to their active form. Inhibits the activation of sulfatases by SUMF1. The protein is Inactive C-alpha-formylglycine-generating enzyme 2 of Mus musculus (Mouse).